The following is a 397-amino-acid chain: Elongation factor Tu (397 aa).

One can recognise a tr-type G domain in the interval 10–207; sequence LPHVNVGTIG…TLDSYIPEPE (198 aa). The G1 stretch occupies residues 19 to 26; it reads GHVDHGKT. Residue 19–26 participates in GTP binding; it reads GHVDHGKT. Position 26 (T26) interacts with Mg(2+). A G2 region spans residues 60–64; the sequence is GITIN. Residues 81-84 are G3; that stretch reads DCPG. Residues 81–85 and 136–139 each bind GTP; these read DCPGH and NKAD. The G4 stretch occupies residues 136-139; sequence NKAD. The interval 174–176 is G5; the sequence is SAR.

Belongs to the TRAFAC class translation factor GTPase superfamily. Classic translation factor GTPase family. EF-Tu/EF-1A subfamily. Monomer.

The protein resides in the cytoplasm. It carries out the reaction GTP + H2O = GDP + phosphate + H(+). GTP hydrolase that promotes the GTP-dependent binding of aminoacyl-tRNA to the A-site of ribosomes during protein biosynthesis. This Pseudomonas fluorescens (strain Pf0-1) protein is Elongation factor Tu.